Here is a 228-residue protein sequence, read N- to C-terminus: Cytochrome c oxidase subunit 2 (228 aa).

Residues 1-14 are Mitochondrial intermembrane-facing; it reads MANHSQLGFQDASS. The chain crosses the membrane as a helical span at residues 15–45; the sequence is PIMEELVEFHDHALIVALAICSLVLYLLAHM. The Mitochondrial matrix portion of the chain corresponds to 46-58; the sequence is LMEKLSSNAVDAQ. The chain crosses the membrane as a helical span at residues 59–86; that stretch reads EVELIWTILPAIVLVLLALPSLQILYMM. The Mitochondrial intermembrane portion of the chain corresponds to 87 to 228; the sequence is DEIDEPDLTL…ETWSSLLSAS (142 aa). 6 residues coordinate Cu cation: His160, Cys195, Glu197, Cys199, His203, and Met206. Glu197 is a Mg(2+) binding site.

Belongs to the cytochrome c oxidase subunit 2 family. Component of the cytochrome c oxidase (complex IV, CIV), a multisubunit enzyme composed of 14 subunits. The complex is composed of a catalytic core of 3 subunits MT-CO1, MT-CO2 and MT-CO3, encoded in the mitochondrial DNA, and 11 supernumerary subunits COX4I, COX5A, COX5B, COX6A, COX6B, COX6C, COX7A, COX7B, COX7C, COX8 and NDUFA4, which are encoded in the nuclear genome. The complex exists as a monomer or a dimer and forms supercomplexes (SCs) in the inner mitochondrial membrane with NADH-ubiquinone oxidoreductase (complex I, CI) and ubiquinol-cytochrome c oxidoreductase (cytochrome b-c1 complex, complex III, CIII), resulting in different assemblies (supercomplex SCI(1)III(2)IV(1) and megacomplex MCI(2)III(2)IV(2)). Found in a complex with TMEM177, COA6, COX18, COX20, SCO1 and SCO2. Interacts with TMEM177 in a COX20-dependent manner. Interacts with COX20. Interacts with COX16. Cu cation serves as cofactor.

It localises to the mitochondrion inner membrane. It catalyses the reaction 4 Fe(II)-[cytochrome c] + O2 + 8 H(+)(in) = 4 Fe(III)-[cytochrome c] + 2 H2O + 4 H(+)(out). Its function is as follows. Component of the cytochrome c oxidase, the last enzyme in the mitochondrial electron transport chain which drives oxidative phosphorylation. The respiratory chain contains 3 multisubunit complexes succinate dehydrogenase (complex II, CII), ubiquinol-cytochrome c oxidoreductase (cytochrome b-c1 complex, complex III, CIII) and cytochrome c oxidase (complex IV, CIV), that cooperate to transfer electrons derived from NADH and succinate to molecular oxygen, creating an electrochemical gradient over the inner membrane that drives transmembrane transport and the ATP synthase. Cytochrome c oxidase is the component of the respiratory chain that catalyzes the reduction of oxygen to water. Electrons originating from reduced cytochrome c in the intermembrane space (IMS) are transferred via the dinuclear copper A center (CU(A)) of subunit 2 and heme A of subunit 1 to the active site in subunit 1, a binuclear center (BNC) formed by heme A3 and copper B (CU(B)). The BNC reduces molecular oxygen to 2 water molecules using 4 electrons from cytochrome c in the IMS and 4 protons from the mitochondrial matrix. In Cairina moschata (Muscovy duck), this protein is Cytochrome c oxidase subunit 2 (MT-CO2).